A 231-amino-acid polypeptide reads, in one-letter code: Thiamine import ATP-binding protein ThiQ (231 aa).

Positions L2–G230 constitute an ABC transporter domain. G32 to S39 contacts ATP.

Belongs to the ABC transporter superfamily. Thiamine importer (TC 3.A.1.19.1) family. In terms of assembly, the complex is composed of two ATP-binding proteins (ThiQ), two transmembrane proteins (ThiP) and a solute-binding protein (ThiB).

The protein resides in the cell inner membrane. The enzyme catalyses thiamine(out) + ATP + H2O = thiamine(in) + ADP + phosphate + H(+). Its function is as follows. Part of the ABC transporter complex ThiBPQ involved in thiamine import. Responsible for energy coupling to the transport system. The protein is Thiamine import ATP-binding protein ThiQ of Ruegeria sp. (strain TM1040) (Silicibacter sp.).